The primary structure comprises 650 residues: Threonine--tRNA ligase (650 aa).

One can recognise a TGS domain in the interval 1–66 (MVQITLPDGS…EHDAQLAIVT (66 aa)). The tract at residues 247–538 (DHRKIGRDLD…LIENHAGAMP (292 aa)) is catalytic. Residues cysteine 338, histidine 389, and histidine 515 each coordinate Zn(2+).

The protein belongs to the class-II aminoacyl-tRNA synthetase family. In terms of assembly, homodimer. It depends on Zn(2+) as a cofactor.

The protein resides in the cytoplasm. It catalyses the reaction tRNA(Thr) + L-threonine + ATP = L-threonyl-tRNA(Thr) + AMP + diphosphate + H(+). Catalyzes the attachment of threonine to tRNA(Thr) in a two-step reaction: L-threonine is first activated by ATP to form Thr-AMP and then transferred to the acceptor end of tRNA(Thr). Also edits incorrectly charged L-seryl-tRNA(Thr). The protein is Threonine--tRNA ligase of Bordetella petrii (strain ATCC BAA-461 / DSM 12804 / CCUG 43448).